The primary structure comprises 152 residues: MKKRLFVLSLILLVALDQLSKFWIVSHIALGEVKPFIPGIVSLTYLQNNGAAFSILQDQQWFFVVITVLVIGYAIYYLATHPHLNIWKQLALLLIISGGIGNFIDRLRLAYVIDMIHLDFVDFAIFNVADSYLTVGVILLVICLWKEEDYGN.

The next 3 membrane-spanning stretches (helical) occupy residues 5–25, 61–81, and 84–104; these read LFVL…FWIV, WFFV…LATH, and LNIW…GNFI. Residues Asp114 and Asp130 contribute to the active site. Residues 125-145 form a helical membrane-spanning segment; sequence IFNVADSYLTVGVILLVICLW.

This sequence belongs to the peptidase A8 family.

It is found in the cell membrane. It carries out the reaction Release of signal peptides from bacterial membrane prolipoproteins. Hydrolyzes -Xaa-Yaa-Zaa-|-(S,diacylglyceryl)Cys-, in which Xaa is hydrophobic (preferably Leu), and Yaa (Ala or Ser) and Zaa (Gly or Ala) have small, neutral side chains.. Its pathway is protein modification; lipoprotein biosynthesis (signal peptide cleavage). Functionally, this protein specifically catalyzes the removal of signal peptides from prolipoproteins. The chain is Lipoprotein signal peptidase from Streptococcus pyogenes serotype M18 (strain MGAS8232).